Consider the following 1003-residue polypeptide: Methyl-CpG-binding domain protein 6 (1003 aa).

Residues 11 to 81 (DRAGGPVATS…KVFNFDPLAP (71 aa)) form the MBD domain. The required for interaction with ASXL1/2/3 stretch occupies residues 57-68 (DGTCKCGLECPL). Disordered stretches follow at residues 120-219 (TCSH…PPPA), 238-664 (VPSD…PLLF), and 683-1003 (ATLD…KLAP). 2 stretches are compositionally biased toward pro residues: residues 140–155 (PGPPSARPPCRVPPTT) and 268–287 (TPPPLPPSNNLPAHPGPASQ). 3 stretches are compositionally biased toward low complexity: residues 297-308 (LPLVLGPLGGAP), 319-328 (LASSLLSAAA), and 348-361 (AQAPSASHSSSLRP). Residues 391–407 (APAPVPQPFSLPEPSQP) are compositionally biased toward pro residues. Residues 408–426 (ILPSVLSLLGLPTPGPSHS) are compositionally biased toward low complexity. Over residues 439-456 (LPPPPTLSSGSPPQPRHP) the composition is skewed to pro residues. Composition is skewed to low complexity over residues 460-498 (SLPGTTSGSLSSVPGAPAPPAASKAPVVPSPVLQSPSEG) and 531-548 (GAGFPGMLGALPLPLSLG). The segment covering 570–589 (QPPPEPLLPPPGGPGPPLAP) has biased composition (pro residues). Positions 590–602 (GEPEGPSLLVASL) are enriched in low complexity. The segment covering 603–617 (LPPPPSDLLPPPSAP) has biased composition (pro residues). A compositionally biased stretch (low complexity) spans 618-633 (PSNLLASFLPLLALGP). Residues 635–649 (AGDGEGSAEGAGGPS) show a composition bias toward gly residues. Residues 650-662 (GEPFSGLGDLSPL) are compositionally biased toward low complexity. Residues 707–718 (TSSVTTATTDPG) are compositionally biased toward polar residues. Low complexity-rich tracts occupy residues 732 to 761 (PPQLLSPLLGASLLGDLSSLTSSPGALPSL), 768 to 778 (LLSGQLGLQLL), and 788 to 798 (SEASSPLACLL). The span at 805-817 (PEQPEAPCLPPES) shows a compositional bias: pro residues. A compositionally biased stretch (low complexity) spans 818–837 (PASALEPEPARPPLSALAPP). Basic residues predominate over residues 947–958 (RKSRRGRRRKYN). Residues 959-969 (PTRNSNSSRQD) show a composition bias toward polar residues. A compositionally biased stretch (basic residues) spans 989-1003 (RPGRPAKNKRRKLAP).

In terms of assembly, core component of the polycomb repressive deubiquitinase (PR-DUB) complex, at least composed of BAP1, one of ASXL1, ASXL2 or (probably) ASXL3, and one of MBD5 or MBD6. Distinct combinations of ASXL and MBD proteins may preferentially bind specific histone modification marks. The PR-DUB core associates with a number of accessory proteins, including FOXK1, FOXK2, KDM1B, HCFC1 and OGT; KDM1B specifically associates with ASXL2 PR-DUB complexes. Interacts (via MBD domain) with ASXL1, ASXL2 and ASXL3 (via PHD domain); the interaction is probably direct, mediates association with other PR-DUB complex core components.

The protein localises to the nucleus. It is found in the chromosome. Non-catalytic component of the polycomb repressive deubiquitinase (PR-DUB) complex, a complex that specifically mediates deubiquitination of histone H2A monoubiquitinated at 'Lys-120' (H2AK119ub1). Important for stability of PR-DUB components and stimulating its ubiquitinase activity. As part of the PR-DUB complex, associates with chromatin enriched in histone marks H3K4me1, H3K4me3, and H3K27Ac, but not in H3K27me3. MBD5 and MBD6 containing complexes associate with distinct chromatin regions enriched in genes involved in different pathways. Heterochromatin recruitment is not mediated by DNA methylation. The PR-DUB complex is an epigenetic regulator of gene expression, including genes involved in development, cell communication, signaling, cell proliferation and cell viability; may promote cancer cell growth. In Homo sapiens (Human), this protein is Methyl-CpG-binding domain protein 6 (MBD6).